The chain runs to 278 residues: Large ribosomal subunit protein uL2 (278 aa).

The disordered stretch occupies residues 222–264 (RGVAMNPVDHPHGGGEGRTSGGRNPVTPWGVPTKGKKTRSNKR).

Belongs to the universal ribosomal protein uL2 family. As to quaternary structure, part of the 50S ribosomal subunit. Forms a bridge to the 30S subunit in the 70S ribosome.

Its function is as follows. One of the primary rRNA binding proteins. Required for association of the 30S and 50S subunits to form the 70S ribosome, for tRNA binding and peptide bond formation. It has been suggested to have peptidyltransferase activity; this is somewhat controversial. Makes several contacts with the 16S rRNA in the 70S ribosome. The polypeptide is Large ribosomal subunit protein uL2 (Methylobacterium radiotolerans (strain ATCC 27329 / DSM 1819 / JCM 2831 / NBRC 15690 / NCIMB 10815 / 0-1)).